We begin with the raw amino-acid sequence, 633 residues long: Chaperone protein HtpG (633 aa).

The tract at residues 1 to 341 (MSATSSKETL…SADLPLNVSR (341 aa)) is a; substrate-binding. A b region spans residues 342 to 558 (EILQSSRDID…EGDMSANLER (217 aa)). Residues 559–633 (LLKAAGQAAP…LNGLLAMLPG (75 aa)) are c.

Belongs to the heat shock protein 90 family. As to quaternary structure, homodimer.

It is found in the cytoplasm. Functionally, molecular chaperone. Has ATPase activity. This is Chaperone protein HtpG from Thiobacillus denitrificans (strain ATCC 25259 / T1).